Reading from the N-terminus, the 1325-residue chain is Cyclic nucleotide-gated channel beta-1 (1325 aa).

Disordered stretches follow at residues methionine 1–valine 124, proline 147–leucine 198, alanine 227–proline 279, tryptophan 340–cysteine 470, leucine 482–serine 637, and lysine 659–alanine 694. At methionine 1 to tyrosine 732 the chain is on the cytoplasmic side. A compositionally biased stretch (acidic residues) spans proline 43–proline 81. Residues leucine 105 to glutamine 121 are compositionally biased toward polar residues. Over residues isoleucine 370 to glutamate 379 the composition is skewed to basic and acidic residues. 3 stretches are compositionally biased toward acidic residues: residues glutamate 380–glutamate 393, glutamate 418–proline 463, and leucine 495–lysine 517. Residues glutamate 518–glycine 527 are compositionally biased toward basic and acidic residues. The span at threonine 560–proline 571 shows a compositional bias: pro residues. The segment at alanine 633–arginine 643 is calmodulin-binding CaM1. A helical membrane pass occupies residues isoleucine 733 to tryptophan 754. The Extracellular segment spans residues alanine 755 to asparagine 763. The helical transmembrane segment at isoleucine 764–phenylalanine 785 threads the bilayer. Residues glutamine 786–aspartate 800 are Cytoplasmic-facing. Residues lysine 801 to cysteine 820 form a helical membrane-spanning segment. The Extracellular portion of the chain corresponds to leucine 821–leucine 836. Residues leucine 837–phenylalanine 849 traverse the membrane as a helical segment. Residues glutamate 850–lysine 861 lie on the Cytoplasmic side of the membrane. Residues alanine 862–leucine 884 form a helical membrane-spanning segment. Residues alanine 862–alanine 961 are ion conduction pathway. Over tyrosine 885–serine 907 the chain is Extracellular. 2 helical membrane passes run tyrosine 908–isoleucine 934 and valine 935–glycine 960. The Cytoplasmic portion of the chain corresponds to alanine 961 to glutamate 1325. The interval alanine 964 to glutamine 1040 is C-linker. Residues leucine 1038–leucine 1142 are cNMP-binding domain. A cyclic nucleotide-binding domain region spans residues arginine 1044–leucine 1160. 5 residues coordinate 3',5'-cyclic GMP: glycine 1105, glutamate 1106, serine 1108, arginine 1118, and threonine 1119. Arginine 1118 contributes to the 3',5'-cyclic AMP binding site. The calmodulin-binding CaM2 stretch occupies residues glutamine 1224–glutamine 1230. Residues glutamine 1226 to alanine 1250 show a composition bias toward low complexity. A disordered region spans residues glutamine 1226–glutamate 1325. Residues lysine 1262–serine 1279 are compositionally biased toward pro residues.

This sequence belongs to the cyclic nucleotide-gated cation channel (TC 1.A.1.5) family. CNGB1 subfamily. As to expression, rod outer segments. Olfactory sensory neurons.

It is found in the cell projection. The protein localises to the cilium membrane. The enzyme catalyses Ca(2+)(in) = Ca(2+)(out). It catalyses the reaction Na(+)(in) = Na(+)(out). It carries out the reaction K(+)(in) = K(+)(out). The catalysed reaction is NH4(+)(in) = NH4(+)(out). The enzyme catalyses Rb(+)(in) = Rb(+)(out). It catalyses the reaction Li(+)(in) = Li(+)(out). It carries out the reaction Cs(+)(in) = Cs(+)(out). Its function is as follows. Pore-forming subunit of the rod cyclic nucleotide-gated channel. Mediates rod photoresponses at dim light converting transient changes in intracellular cGMP levels into electrical signals. In the dark, cGMP levels are high and keep the channel open enabling a steady inward current carried by Na(+) and Ca(2+) ions that leads to membrane depolarization and neurotransmitter release from synaptic terminals. Upon photon absorption cGMP levels decline leading to channel closure and membrane hyperpolarization that ultimately slows neurotransmitter release and signals the presence of light, the end point of the phototransduction cascade. Pore-forming subunit of the olfactory cyclic nucleotide-gated channel. Operates in the cilia of olfactory sensory neurons where chemical stimulation of the odorant is converted to an electrical signal. Mediates odorant-induced cAMP-dependent Ca(2+) influx triggering neuron depolarization. The rise of intracellular Ca(2+) levels potentiates the olfactory response by activating Ca(2+)-dependent Cl(-) channels, but it also serves as a negative feedback signal to desensitize the channel for rapid adaptation to odorants. Conducts cGMP- and cAMP-gated ion currents, with permeability for monovalent and divalent cations. The selectivity for Ca(2+) over Na(+) increases with cGMP concentrations, whereas the selectivity among monovalent ions is independent of the cGMP levels. This chain is Cyclic nucleotide-gated channel beta-1, found in Mus musculus (Mouse).